We begin with the raw amino-acid sequence, 142 residues long: Large ribosomal subunit protein uL23 (142 aa).

It belongs to the universal ribosomal protein uL23 family.

Its function is as follows. This protein binds to a specific region on the 26S rRNA. This Cyberlindnera jadinii (Torula yeast) protein is Large ribosomal subunit protein uL23 (RPL25).